The sequence spans 390 residues: Heparan sulfate glucosamine 3-O-sulfotransferase 3B1 (390 aa).

The interval 1–25 is disordered; sequence MGQRLSGGRSCLDVPGRLLPQPPPP. The Cytoplasmic portion of the chain corresponds to 1–32; that stretch reads MGQRLSGGRSCLDVPGRLLPQPPPPPPPVRRK. A helical; Signal-anchor for type II membrane protein transmembrane segment spans residues 33 to 53; sequence LALLFAMLCVWLYMFLYSCAG. The Lumenal segment spans residues 54–390; that stretch reads SCAAAPGLLL…QMTGHDFGWD (337 aa). Residues 74-133 are disordered; sequence PPALATAPDGTPPRLPFRAPPATPLASGKEMAEGAASPEEQSPEVPDSPSPISSFFSGSG. The span at 83–96 shows a compositional bias: pro residues; sequence GTPPRLPFRAPPAT. Residues 123 to 133 show a composition bias toward low complexity; it reads SPISSFFSGSG. 147 to 151 provides a ligand contact to 3'-phosphoadenylyl sulfate; it reads KGGTR. Substrate-binding positions include 169–175 and 200–203; these read EPHFFDR and KTPS. Residues arginine 228 and serine 236 each coordinate 3'-phosphoadenylyl sulfate. A glycan (N-linked (GlcNAc...) asparagine) is linked at asparagine 258. Residue 268–269 participates in substrate binding; sequence WS. N-linked (GlcNAc...) asparagine glycosylation is present at asparagine 329. Cysteine 336 and cysteine 348 are disulfide-bonded. Position 353-357 (353-357) interacts with 3'-phosphoadenylyl sulfate; sequence KGRTH.

The protein belongs to the sulfotransferase 1 family. Ubiquitous. Most abundant in liver and placenta, followed by heart and kidney.

It is found in the golgi apparatus membrane. It carries out the reaction alpha-D-glucosaminyl-[heparan sulfate](n) + 3'-phosphoadenylyl sulfate = 3-sulfo-alpha-D-glucosaminyl-[heparan sulfate](n) + adenosine 3',5'-bisphosphate + H(+). Sulfotransferase that utilizes 3'-phospho-5'-adenylyl sulfate (PAPS) to catalyze the transfer of a sulfo group to an N-unsubstituted glucosamine linked to a 2-O-sulfo iduronic acid unit on heparan sulfate. Catalyzes the O-sulfation of glucosamine in IdoUA2S-GlcNS and also in IdoUA2S-GlcNH2. The substrate-specific O-sulfation generates an enzyme-modified heparan sulfate which acts as a binding receptor to Herpes simplex virus-1 (HSV-1) and permits its entry. Unlike HS3ST1/3-OST-1, does not convert non-anticoagulant heparan sulfate to anticoagulant heparan sulfate. This chain is Heparan sulfate glucosamine 3-O-sulfotransferase 3B1 (HS3ST3B1), found in Homo sapiens (Human).